Here is a 122-residue protein sequence, read N- to C-terminus: Large ribosomal subunit protein uL14 (122 aa).

This sequence belongs to the universal ribosomal protein uL14 family. As to quaternary structure, part of the 50S ribosomal subunit. Forms a cluster with proteins L3 and L19. In the 70S ribosome, L14 and L19 interact and together make contacts with the 16S rRNA in bridges B5 and B8.

Its function is as follows. Binds to 23S rRNA. Forms part of two intersubunit bridges in the 70S ribosome. In Pelobacter propionicus (strain DSM 2379 / NBRC 103807 / OttBd1), this protein is Large ribosomal subunit protein uL14.